Consider the following 673-residue polypeptide: DNA ligase (673 aa).

NAD(+) contacts are provided by residues 38-42 (DSVYD), 87-88 (SL), and E119. K121 functions as the N6-AMP-lysine intermediate in the catalytic mechanism. Residues R142, E179, K296, and K320 each coordinate NAD(+). Residues C414, C417, C432, and C438 each coordinate Zn(2+). The BRCT domain maps to 595–673 (VVKSEIAGKT…EEAFLKLLKS (79 aa)).

Belongs to the NAD-dependent DNA ligase family. LigA subfamily. Mg(2+) is required as a cofactor. Requires Mn(2+) as cofactor.

It catalyses the reaction NAD(+) + (deoxyribonucleotide)n-3'-hydroxyl + 5'-phospho-(deoxyribonucleotide)m = (deoxyribonucleotide)n+m + AMP + beta-nicotinamide D-nucleotide.. Its function is as follows. DNA ligase that catalyzes the formation of phosphodiester linkages between 5'-phosphoryl and 3'-hydroxyl groups in double-stranded DNA using NAD as a coenzyme and as the energy source for the reaction. It is essential for DNA replication and repair of damaged DNA. This chain is DNA ligase, found in Coxiella burnetii (strain RSA 493 / Nine Mile phase I).